The sequence spans 187 residues: GTP cyclohydrolase 1 (187 aa).

Zn(2+) contacts are provided by Cys76, His79, and Cys148.

The protein belongs to the GTP cyclohydrolase I family. As to quaternary structure, toroid-shaped homodecamer, composed of two pentamers of five dimers.

The enzyme catalyses GTP + H2O = 7,8-dihydroneopterin 3'-triphosphate + formate + H(+). It functions in the pathway cofactor biosynthesis; 7,8-dihydroneopterin triphosphate biosynthesis; 7,8-dihydroneopterin triphosphate from GTP: step 1/1. The polypeptide is GTP cyclohydrolase 1 (Streptococcus agalactiae serotype III (strain NEM316)).